The sequence spans 258 residues: MLAKRIIPCLDVKDGQVVKGVQFRNHEIIGDIVPLAQRYAQEGADELVFYDITASSDGRVVDKSWVARVAEVIDIPFCVAGGIKSVEDASQILTFGADKISINSPALADPTLITRLADRYGVQCIVVGIDTWYDTESDSYQVYQFTGDEKRTKATTWQTEDWVKEVQLRGAGEIVLNMMNQDGVRNGYDLRQLQQMRAICHVPLIASGGAGTPDHFLEAFRDADVDGALAASVFHKQIINIGELKKYLSEQGVEIRVC.

Catalysis depends on residues D11 and D130.

This sequence belongs to the HisA/HisF family. Heterodimer of HisH and HisF.

It localises to the cytoplasm. The catalysed reaction is 5-[(5-phospho-1-deoxy-D-ribulos-1-ylimino)methylamino]-1-(5-phospho-beta-D-ribosyl)imidazole-4-carboxamide + L-glutamine = D-erythro-1-(imidazol-4-yl)glycerol 3-phosphate + 5-amino-1-(5-phospho-beta-D-ribosyl)imidazole-4-carboxamide + L-glutamate + H(+). Its pathway is amino-acid biosynthesis; L-histidine biosynthesis; L-histidine from 5-phospho-alpha-D-ribose 1-diphosphate: step 5/9. Its function is as follows. IGPS catalyzes the conversion of PRFAR and glutamine to IGP, AICAR and glutamate. The HisF subunit catalyzes the cyclization activity that produces IGP and AICAR from PRFAR using the ammonia provided by the HisH subunit. This Yersinia pseudotuberculosis serotype O:1b (strain IP 31758) protein is Imidazole glycerol phosphate synthase subunit HisF.